A 144-amino-acid polypeptide reads, in one-letter code: uncharacterized protein (144 aa).

A signal peptide spans 1–16 (MRKFLIVLLLPLLVLA).

This is an uncharacterized protein from Aquifex aeolicus (strain VF5).